The sequence spans 102 residues: Small ribosomal subunit protein uS10 (102 aa).

The protein belongs to the universal ribosomal protein uS10 family. As to quaternary structure, part of the 30S ribosomal subunit.

Involved in the binding of tRNA to the ribosomes. The sequence is that of Small ribosomal subunit protein uS10 from Roseiflexus castenholzii (strain DSM 13941 / HLO8).